We begin with the raw amino-acid sequence, 229 residues long: Large ribosomal subunit protein uL1 (229 aa).

Belongs to the universal ribosomal protein uL1 family. As to quaternary structure, part of the 50S ribosomal subunit.

In terms of biological role, binds directly to 23S rRNA. The L1 stalk is quite mobile in the ribosome, and is involved in E site tRNA release. Protein L1 is also a translational repressor protein, it controls the translation of the L11 operon by binding to its mRNA. This chain is Large ribosomal subunit protein uL1, found in Clostridium tetani (strain Massachusetts / E88).